A 485-amino-acid chain; its full sequence is GlcNAc-binding protein A (485 aa).

The first 23 residues, 1-23 (MKKQPKMTAIALILSGISGLAYG), serve as a signal peptide directing secretion. In terms of domain architecture, Chitin-binding type-4 spans 24-201 (HGYVSAVENG…SFYNVIDVKF (178 aa)). Positions 437 to 478 (AGTKVLASDGAIYQCKPWPYSGYCQQWTSNATQYQPGTGSHW) constitute a Chitin-binding type-3 domain.

This sequence belongs to the GbpA family.

The protein resides in the secreted. In terms of biological role, probably interacts with GlcNAc residues. May promote attachment to both epithelial cell surfaces and chitin. The protein is GlcNAc-binding protein A of Vibrio cholerae serotype O1 (strain M66-2).